The chain runs to 67 residues: MWRIWRLFDPMRAMVAQAVFLLGLAVLIHLMLLGTNKYNWLDGAKKAPVATAVAPVPAEVTSLAQAK.

Topologically, residues 1–12 are cytoplasmic; that stretch reads MWRIWRLFDPMR. A helical transmembrane segment spans residues 13-33; the sequence is AMVAQAVFLLGLAVLIHLMLL. His-29 serves as a coordination point for a bacteriochlorophyll. At 34–67 the chain is on the periplasmic side; that stretch reads GTNKYNWLDGAKKAPVATAVAPVPAEVTSLAQAK.

This sequence belongs to the antenna complex alpha subunit family. As to quaternary structure, an alpha/beta heterodimer. The core complex is formed by different alpha and beta chains, binding bacteriochlorophyll molecules, and arranged most probably in tetrameric structures disposed around the reaction center. The non-pigmented gamma chains may constitute additional components.

Its subcellular location is the cell inner membrane. Functionally, antenna complexes are light-harvesting systems, which transfer the excitation energy to the reaction centers. The sequence is that of Light-harvesting protein B-870 alpha chain (pufA) from Rubrivivax gelatinosus (strain NBRC 100245 / IL144).